The sequence spans 76 residues: Brevinin-2ISb (76 aa).

The N-terminal stretch at 1–22 (MFTMKKSLLVLFFLGTISLSLC) is a signal peptide. Residues 23–41 (QEERNADEEDGGEATEEEV) constitute a propeptide, removed in mature form. A disulfide bridge links Cys-70 with Cys-76.

As to expression, expressed by the skin glands.

The protein localises to the secreted. Functionally, has antimicrobial activity against Gram-negative bacterium E.coli ATCC 8739 (MIC=12.5 ug), against Gram positive bacteria S.aureus ATCC 6538 (MIC=6.3 ug) and B.subtilis ATCC 6633 (MIC=25 ug). Has no activity against methicillin-resistant S.aureus ATCC 43300 (MIC= ug) and fungus C.albicans ATCC 90028. This chain is Brevinin-2ISb, found in Odorrana ishikawae (Ishikawa's frog).